The primary structure comprises 309 residues: Sulfate adenylyltransferase subunit 2 (309 aa).

Belongs to the PAPS reductase family. CysD subfamily. In terms of assembly, heterodimer composed of CysD, the smaller subunit, and CysN.

It catalyses the reaction sulfate + ATP + H(+) = adenosine 5'-phosphosulfate + diphosphate. It functions in the pathway sulfur metabolism; hydrogen sulfide biosynthesis; sulfite from sulfate: step 1/3. Functionally, with CysN forms the ATP sulfurylase (ATPS) that catalyzes the adenylation of sulfate producing adenosine 5'-phosphosulfate (APS) and diphosphate, the first enzymatic step in sulfur assimilation pathway. APS synthesis involves the formation of a high-energy phosphoric-sulfuric acid anhydride bond driven by GTP hydrolysis by CysN coupled to ATP hydrolysis by CysD. The sequence is that of Sulfate adenylyltransferase subunit 2 from Mycobacterium sp. (strain KMS).